A 121-amino-acid chain; its full sequence is Large ribosomal subunit protein uL18 (121 aa).

This sequence belongs to the universal ribosomal protein uL18 family. Part of the 50S ribosomal subunit; part of the 5S rRNA/L5/L18/L25 subcomplex. Contacts the 5S and 23S rRNAs.

Its function is as follows. This is one of the proteins that bind and probably mediate the attachment of the 5S RNA into the large ribosomal subunit, where it forms part of the central protuberance. This chain is Large ribosomal subunit protein uL18, found in Paraburkholderia phymatum (strain DSM 17167 / CIP 108236 / LMG 21445 / STM815) (Burkholderia phymatum).